The following is a 358-amino-acid chain: Alternative oxidase, mitochondrial (358 aa).

Residues 152 to 172 (LIRYVFLESVAGVPGMVAGML) traverse the membrane as a helical segment. Fe cation-binding residues include glutamate 159, glutamate 198, and histidine 201. Residues 218-238 (MILGAQGVFFNSFFLCYLFSP) traverse the membrane as a helical segment. Fe cation-binding residues include glutamate 249, glutamate 306, and histidine 309.

It belongs to the alternative oxidase family. Requires Fe cation as cofactor.

It localises to the mitochondrion inner membrane. Its function is as follows. Catalyzes cyanide-resistant oxygen consumption. May increase respiration when the cytochrome respiratory pathway is restricted, or in response to low temperatures. The polypeptide is Alternative oxidase, mitochondrial (AOX1) (Monilinia fructicola (Brown rot fungus)).